A 259-amino-acid chain; its full sequence is 5'-nucleotidase SurE (259 aa).

Asp8, Asp9, Ser40, and Asn92 together coordinate a divalent metal cation.

The protein belongs to the SurE nucleotidase family. A divalent metal cation is required as a cofactor.

Its subcellular location is the cytoplasm. It carries out the reaction a ribonucleoside 5'-phosphate + H2O = a ribonucleoside + phosphate. Nucleotidase that shows phosphatase activity on nucleoside 5'-monophosphates. This Xanthomonas euvesicatoria pv. vesicatoria (strain 85-10) (Xanthomonas campestris pv. vesicatoria) protein is 5'-nucleotidase SurE.